Reading from the N-terminus, the 173-residue chain is Cytochrome c-type biogenesis protein CcmE (173 aa).

Topologically, residues Met1 to Arg8 are cytoplasmic. Residues Phe9 to Ala29 traverse the membrane as a helical; Signal-anchor for type II membrane protein segment. Residues Leu30–Lys173 lie on the Periplasmic side of the membrane. The heme site is built by His131 and Tyr135. The interval Gly152–Lys173 is disordered. Residues Ala156–Lys173 show a composition bias toward basic and acidic residues.

It belongs to the CcmE/CycJ family.

The protein localises to the cell inner membrane. Functionally, heme chaperone required for the biogenesis of c-type cytochromes. Transiently binds heme delivered by CcmC and transfers the heme to apo-cytochromes in a process facilitated by CcmF and CcmH. The sequence is that of Cytochrome c-type biogenesis protein CcmE from Haemophilus influenzae (strain ATCC 51907 / DSM 11121 / KW20 / Rd).